The sequence spans 356 residues: Tyrosine recombinase XerS (356 aa).

The 106-residue stretch at 16–121 (LMPWFVLEYY…ALSCLYKYLT (106 aa)) folds into the Core-binding (CB) domain. One can recognise a Tyr recombinase domain in the interval 169–354 (KFLDYVENEY…VNDEQKNALD (186 aa)). Residues arginine 210, lysine 234, histidine 306, arginine 309, and histidine 332 contribute to the active site. Tyrosine 341 acts as the O-(3'-phospho-DNA)-tyrosine intermediate in catalysis.

The protein belongs to the 'phage' integrase family. XerS subfamily.

The protein localises to the cytoplasm. With respect to regulation, ftsK is required for recombination. Functionally, site-specific tyrosine recombinase, which acts by catalyzing the cutting and rejoining of the recombining DNA molecules. Essential to convert dimers of the bacterial chromosome into monomers to permit their segregation at cell division. This Streptococcus thermophilus (strain ATCC BAA-250 / LMG 18311) protein is Tyrosine recombinase XerS.